Consider the following 384-residue polypeptide: tRNA-specific 2-thiouridylase MnmA (384 aa).

ATP contacts are provided by residues 29-36 and Leu-55; that span reads AMSGGVDS. The active-site Nucleophile is the Cys-123. A disulfide bond links Cys-123 and Cys-220. Gly-147 serves as a coordination point for ATP. An interaction with tRNA region spans residues 169 to 171; sequence RDQ. Cys-220 acts as the Cysteine persulfide intermediate in catalysis.

This sequence belongs to the MnmA/TRMU family.

Its subcellular location is the cytoplasm. It carries out the reaction S-sulfanyl-L-cysteinyl-[protein] + uridine(34) in tRNA + AH2 + ATP = 2-thiouridine(34) in tRNA + L-cysteinyl-[protein] + A + AMP + diphosphate + H(+). Its function is as follows. Catalyzes the 2-thiolation of uridine at the wobble position (U34) of tRNA, leading to the formation of s(2)U34. This is tRNA-specific 2-thiouridylase MnmA from Dinoroseobacter shibae (strain DSM 16493 / NCIMB 14021 / DFL 12).